The primary structure comprises 264 residues: Thymidylate synthase (264 aa).

R21 contributes to the dUMP binding site. H51 is a binding site for (6R)-5,10-methylene-5,6,7,8-tetrahydrofolate. DUMP is bound at residue 126–127 (RR). Residue C146 is the Nucleophile of the active site. DUMP-binding positions include 166–169 (RSCD), N177, and 207–209 (HLY). A (6R)-5,10-methylene-5,6,7,8-tetrahydrofolate-binding site is contributed by D169. A263 contributes to the (6R)-5,10-methylene-5,6,7,8-tetrahydrofolate binding site.

It belongs to the thymidylate synthase family. Bacterial-type ThyA subfamily. As to quaternary structure, homodimer.

It is found in the cytoplasm. It catalyses the reaction dUMP + (6R)-5,10-methylene-5,6,7,8-tetrahydrofolate = 7,8-dihydrofolate + dTMP. It functions in the pathway pyrimidine metabolism; dTTP biosynthesis. Catalyzes the reductive methylation of 2'-deoxyuridine-5'-monophosphate (dUMP) to 2'-deoxythymidine-5'-monophosphate (dTMP) while utilizing 5,10-methylenetetrahydrofolate (mTHF) as the methyl donor and reductant in the reaction, yielding dihydrofolate (DHF) as a by-product. This enzymatic reaction provides an intracellular de novo source of dTMP, an essential precursor for DNA biosynthesis. The chain is Thymidylate synthase from Edwardsiella ictaluri (strain 93-146).